Here is a 113-residue protein sequence, read N- to C-terminus: Retrotransposon Gag-like protein 8 (113 aa).

This sequence belongs to the FAM127 family.

The sequence is that of Retrotransposon Gag-like protein 8 (RTL8A) from Bos taurus (Bovine).